Consider the following 411-residue polypeptide: Phosphopentomutase (411 aa).

Residues aspartate 14, aspartate 306, histidine 311, aspartate 347, histidine 348, and histidine 359 each coordinate Mn(2+).

This sequence belongs to the phosphopentomutase family. Requires Mn(2+) as cofactor.

It localises to the cytoplasm. It catalyses the reaction 2-deoxy-alpha-D-ribose 1-phosphate = 2-deoxy-D-ribose 5-phosphate. The enzyme catalyses alpha-D-ribose 1-phosphate = D-ribose 5-phosphate. It participates in carbohydrate degradation; 2-deoxy-D-ribose 1-phosphate degradation; D-glyceraldehyde 3-phosphate and acetaldehyde from 2-deoxy-alpha-D-ribose 1-phosphate: step 1/2. Its function is as follows. Isomerase that catalyzes the conversion of deoxy-ribose 1-phosphate (dRib-1-P) and ribose 1-phosphate (Rib-1-P) to deoxy-ribose 5-phosphate (dRib-5-P) and ribose 5-phosphate (Rib-5-P), respectively. The polypeptide is Phosphopentomutase (Lactococcus lactis subsp. lactis (strain IL1403) (Streptococcus lactis)).